Reading from the N-terminus, the 298-residue chain is MSDTSENSNAEIPADTSDVKDKPKPIVRAPQFPPPPEGISKSQWKKICRKKRFEETRAEYAQIRKEKRNRAKLARREKLKEYTDRGEEIPEELKRPPKVNLNQSDSGISIILDCSFDDLMNDREIVSLSTQVTRAYSSNKRENNYAKIKVTSFDKRLKQRFDNDLSNSNYTKWKNFEFTADPTLPTENAVYLTADTEEKLDTLEPGTTYIVGGIVDKNRHKNLCYNKAKELNIPTKRLPIGEFINLAGRKVLTTSHMVQLMLRYFDNKDWKEAFESVLPPRKLEVDSTKEDSETASAE.

Positions 1–10 are enriched in polar residues; sequence MSDTSENSNA. The tract at residues 1–44 is disordered; it reads MSDTSENSNAEIPADTSDVKDKPKPIVRAPQFPPPPEGISKSQW. The SAM-dependent MTase TRM10-type domain maps to 96–285; sequence PPKVNLNQSD…SVLPPRKLEV (190 aa). S-adenosyl-L-methionine-binding positions include 192 to 193, Gly-212, 216 to 220, Cys-224, Leu-238, and 250 to 252; these read LT, DKNRH, and KVL. The active-site Proton acceptor is the Asp-216.

This sequence belongs to the class IV-like SAM-binding methyltransferase superfamily. TRM10 family. Monomer.

The protein localises to the cytoplasm. It is found in the nucleus. It catalyses the reaction guanosine(9) in tRNA + S-adenosyl-L-methionine = N(1)-methylguanosine(9) in tRNA + S-adenosyl-L-homocysteine + H(+). Its function is as follows. S-adenosyl-L-methionine-dependent guanine N(1)-methyltransferase that catalyzes the formation of N(1)-methylguanine at position 9 (m1G9) in cytoplasmic tRNA. This chain is tRNA (guanine(9)-N1)-methyltransferase, found in Kluyveromyces lactis (strain ATCC 8585 / CBS 2359 / DSM 70799 / NBRC 1267 / NRRL Y-1140 / WM37) (Yeast).